The following is a 331-amino-acid chain: MITVTNARKNYGNFAALDDVTIEIPSGELTALLGPSGSGKSTLLRSIAGLEALDDGVVVIAGKDVTRVAPQKRDIGFVFQHYAAFKHMTVRDNVAFGLKIRKRPKAEITKRVDELLGIVGLDGFQHRYPAQLSGGQRQRMALARALAVDPQVLLLDEPFGALDAKVRADLRTWLRRLHEEVHVTTVLVTHDQEEALDVADRIAVMNKGRIEQVGTPEDVYDRPANEFVMSFLGDVARLNGHLVRPHDIRVGRDPSMALAAHEGTAESAGVTRATVERVVHLGFEVRVELRNAATGDLFSAQVTRGDAEALRLTDGETVYARATRIPELPTQ.

The ABC transporter domain maps to 2-232 (ITVTNARKNY…PANEFVMSFL (231 aa)). Residue 34–41 (GPSGSGKS) participates in ATP binding.

Belongs to the ABC transporter superfamily. Sulfate/tungstate importer (TC 3.A.1.6) family. In terms of assembly, the complex is composed of two ATP-binding proteins (CysA), two transmembrane proteins (CysT and CysW) and a solute-binding protein (CysP).

It is found in the cell membrane. It carries out the reaction sulfate(out) + ATP + H2O = sulfate(in) + ADP + phosphate + H(+). It catalyses the reaction thiosulfate(out) + ATP + H2O = thiosulfate(in) + ADP + phosphate + H(+). Functionally, part of the ABC transporter complex CysAWTP involved in sulfate/thiosulfate import. Responsible for energy coupling to the transport system. This is Sulfate/thiosulfate import ATP-binding protein CysA from Nocardia farcinica (strain IFM 10152).